The primary structure comprises 227 residues: Enolase-phosphatase E1 (227 aa).

Residues Asp11 and Glu13 each coordinate Mg(2+). Residues 118 to 119 (SS) and Lys161 each bind substrate. Asp186 is a binding site for Mg(2+).

The protein belongs to the HAD-like hydrolase superfamily. MasA/MtnC family. In terms of assembly, monomer. Mg(2+) is required as a cofactor.

The protein resides in the cytoplasm. Its subcellular location is the nucleus. The enzyme catalyses 5-methylsulfanyl-2,3-dioxopentyl phosphate + H2O = 1,2-dihydroxy-5-(methylsulfanyl)pent-1-en-3-one + phosphate. It participates in amino-acid biosynthesis; L-methionine biosynthesis via salvage pathway; L-methionine from S-methyl-5-thio-alpha-D-ribose 1-phosphate: step 3/6. Its pathway is amino-acid biosynthesis; L-methionine biosynthesis via salvage pathway; L-methionine from S-methyl-5-thio-alpha-D-ribose 1-phosphate: step 4/6. In terms of biological role, bifunctional enzyme that catalyzes the enolization of 2,3-diketo-5-methylthiopentyl-1-phosphate (DK-MTP-1-P) into the intermediate 2-hydroxy-3-keto-5-methylthiopentenyl-1-phosphate (HK-MTPenyl-1-P), which is then dephosphorylated to form the acireductone 1,2-dihydroxy-3-keto-5-methylthiopentene (DHK-MTPene). The protein is Enolase-phosphatase E1 of Saccharomyces cerevisiae (strain ATCC 204508 / S288c) (Baker's yeast).